Here is a 103-residue protein sequence, read N- to C-terminus: UPF0235 protein RL4503 (103 aa).

It belongs to the UPF0235 family.

The protein is UPF0235 protein RL4503 of Rhizobium johnstonii (strain DSM 114642 / LMG 32736 / 3841) (Rhizobium leguminosarum bv. viciae).